We begin with the raw amino-acid sequence, 152 residues long: SKP1-like protein 10 (152 aa).

The interval 94–152 (IMAANYLNIKSLLDLACQTVADMIKDNTVEHTRKFFNIENDYTHEEEEAVRRENQWGFE) is interaction with the F-box domain of F-box proteins.

It belongs to the SKP1 family. Part of a SCF (SKP1-cullin-F-box) protein ligase complex. Interacts with CPR1/CPR30. In terms of tissue distribution, expressed in young seedlings, roots, leaves, floral stems, inflorescences, and siliques.

The protein resides in the nucleus. The protein operates within protein modification; protein ubiquitination. Its function is as follows. Involved in ubiquitination and subsequent proteasomal degradation of target proteins. Together with CUL1, RBX1 and a F-box protein, it forms a SCF E3 ubiquitin ligase complex. The functional specificity of this complex depends on the type of F-box protein. In the SCF complex, it serves as an adapter that links the F-box protein to CUL1. In Arabidopsis thaliana (Mouse-ear cress), this protein is SKP1-like protein 10 (ASK10).